A 343-amino-acid chain; its full sequence is Protein phosphatase 2C homolog 7, mitochondrial (343 aa).

A mitochondrion-targeting transit peptide spans 1–39; that stretch reads MFANVGFRTLRVSRGPLYGSCSQIISFSKRTFYSSAKSG. In terms of domain architecture, PPM-type phosphatase spans 76-342; sequence IYQKLKDSIR…DDITVVVVRV (267 aa). Residues Asp109, Gly110, and Asp265 each coordinate Mn(2+).

Requires Mg(2+) as cofactor. The cofactor is Mn(2+).

The protein localises to the mitochondrion. It catalyses the reaction O-phospho-L-seryl-[protein] + H2O = L-seryl-[protein] + phosphate. The enzyme catalyses O-phospho-L-threonyl-[protein] + H2O = L-threonyl-[protein] + phosphate. Its function is as follows. Protein phosphatase which positively regulates biosynthesis of the ubiquinone, coenzyme Q. Dephosphorylates and activates the ubiquinone biosynthesis protein CAT5/COQ7. Also dephosphorylates CIT1 on 'Ser-462', which leads to its activation. The polypeptide is Protein phosphatase 2C homolog 7, mitochondrial (PTC7) (Saccharomyces cerevisiae (strain ATCC 204508 / S288c) (Baker's yeast)).